The following is a 206-amino-acid chain: Large ribosomal subunit protein uL4 (206 aa).

The interval 47 to 79 is disordered; the sequence is GTKGQKNRSAVRGGGAKPWAQKGSGRARAGTSR. The span at 69-79 shows a compositional bias: low complexity; sequence GSGRARAGTSR.

Belongs to the universal ribosomal protein uL4 family. Part of the 50S ribosomal subunit.

Its function is as follows. One of the primary rRNA binding proteins, this protein initially binds near the 5'-end of the 23S rRNA. It is important during the early stages of 50S assembly. It makes multiple contacts with different domains of the 23S rRNA in the assembled 50S subunit and ribosome. Forms part of the polypeptide exit tunnel. In Hydrogenovibrio crunogenus (strain DSM 25203 / XCL-2) (Thiomicrospira crunogena), this protein is Large ribosomal subunit protein uL4.